We begin with the raw amino-acid sequence, 387 residues long: Na(+)/H(+) antiporter NhaA (387 aa).

12 helical membrane passes run 16–36 (AGGVVLIIATIVSLLVANSSI), 53–73 (IEHYVNDGLMTIFFLLIGLEL), 89–109 (LLPIIAALGGMIVPACIHMFF), 118–138 (GSGIPMATDIAFAVGILSLLG), 147–167 (VFLTALAVIDDLGAIFTIAIF), 171–191 (GIDVMYLAGAAGIWAVLFILN), 197–217 (ILWPYLLGGIVMWYFMLHSGV), 220–240 (TITGVILAFVIPFGKGDPDSI), 251–271 (PVAFIILPIFALANTCIIIDS), 283–303 (IGIFLGLVVGKPLGITLFCAI), 321–341 (VIGVACLGGIGFTMSIFITLL), and 354–374 (IAIMLSSVTAALIGLLWLKMT).

Belongs to the NhaA Na(+)/H(+) (TC 2.A.33) antiporter family.

It is found in the cell inner membrane. The enzyme catalyses Na(+)(in) + 2 H(+)(out) = Na(+)(out) + 2 H(+)(in). Its function is as follows. Na(+)/H(+) antiporter that extrudes sodium in exchange for external protons. The sequence is that of Na(+)/H(+) antiporter NhaA from Cytophaga hutchinsonii (strain ATCC 33406 / DSM 1761 / CIP 103989 / NBRC 15051 / NCIMB 9469 / D465).